Reading from the N-terminus, the 198-residue chain is Proteasome subunit beta 1 (198 aa).

Residues 1 to 8 (MSMYMPGA) constitute a propeptide, removed in mature form; by autocatalysis. Thr-9 acts as the Nucleophile in catalysis.

The protein belongs to the peptidase T1B family. As to quaternary structure, the 20S proteasome core is composed of 14 alpha and 14 beta subunits that assemble into four stacked heptameric rings, resulting in a barrel-shaped structure. The two inner rings, each composed of seven catalytic beta subunits, are sandwiched by two outer rings, each composed of seven alpha subunits. The catalytic chamber with the active sites is on the inside of the barrel. Has a gated structure, the ends of the cylinder being occluded by the N-termini of the alpha-subunits. Is capped at one or both ends by the proteasome regulatory ATPase, PAN.

It is found in the cytoplasm. It carries out the reaction Cleavage of peptide bonds with very broad specificity.. Its activity is regulated as follows. The formation of the proteasomal ATPase PAN-20S proteasome complex, via the docking of the C-termini of PAN into the intersubunit pockets in the alpha-rings, triggers opening of the gate for substrate entry. Interconversion between the open-gate and close-gate conformations leads to a dynamic regulation of the 20S proteasome proteolysis activity. In terms of biological role, component of the proteasome core, a large protease complex with broad specificity involved in protein degradation. The chain is Proteasome subunit beta 1 from Nitrosopumilus maritimus (strain SCM1).